The sequence spans 38 residues: Large ribosomal subunit protein bL36 (38 aa).

It belongs to the bacterial ribosomal protein bL36 family.

The protein is Large ribosomal subunit protein bL36 of Gemmatimonas aurantiaca (strain DSM 14586 / JCM 11422 / NBRC 100505 / T-27).